Here is a 676-residue protein sequence, read N- to C-terminus: Transketolase 7 (676 aa).

His36 serves as a coordination point for substrate. Residues His76 and 125–127 (GPL) contribute to the thiamine diphosphate site. Asp166 contributes to the Mg(2+) binding site. Gly167 and Asn196 together coordinate thiamine diphosphate. Mg(2+) contacts are provided by Asn196 and Ile198. Substrate-binding residues include His273, Arg367, and Ser394. A thiamine diphosphate-binding site is contributed by His273. Thiamine diphosphate-binding residues include Glu421 and Phe448. The active-site Proton donor is the Glu421. Positions 472, 480, and 531 each coordinate substrate.

The protein belongs to the transketolase family. Homodimer. Mg(2+) serves as cofactor. The cofactor is Ca(2+). It depends on Mn(2+) as a cofactor. Co(2+) is required as a cofactor. Requires thiamine diphosphate as cofactor. In terms of tissue distribution, leaves and roots.

The enzyme catalyses D-sedoheptulose 7-phosphate + D-glyceraldehyde 3-phosphate = aldehydo-D-ribose 5-phosphate + D-xylulose 5-phosphate. Could be involved in the conversion of sugars, which are a major phenomenon in the rehydration process. In terms of biological role, catalyzes the transfer of a two-carbon ketol group from a ketose donor to an aldose acceptor, via a covalent intermediate with the cofactor thiamine pyrophosphate. The protein is Transketolase 7 (TKT7) of Craterostigma plantagineum (Blue gem).